We begin with the raw amino-acid sequence, 364 residues long: Dihydroorotase (364 aa).

Positions 14, 16, 98, 137, 180, and 258 each coordinate Zn(2+). K98 carries the N6-carboxylysine modification.

The protein belongs to the metallo-dependent hydrolases superfamily. DHOase family. Class II DHOase subfamily. It depends on Zn(2+) as a cofactor.

The catalysed reaction is (S)-dihydroorotate + H2O = N-carbamoyl-L-aspartate + H(+). It participates in pyrimidine metabolism; UMP biosynthesis via de novo pathway; (S)-dihydroorotate from bicarbonate: step 3/3. Functionally, catalyzes the conversion of ureidosuccinic acid (USA) to dihydroorotate, the third step of the de novo pyrimidine biosynthetic pathway. This chain is Dihydroorotase (URA4), found in Saccharomyces cerevisiae (strain ATCC 204508 / S288c) (Baker's yeast).